The primary structure comprises 396 residues: THAP domain-containing protein 5 (396 aa).

A THAP-type zinc finger spans residues 2–85 (MPRYCAAICC…LKQTAVPTIF (84 aa)). A disordered region spans residues 86 to 113 (SLPEDNQGKDPSKKKSQKKNLEDEKEVC). Residues 91–113 (NQGKDPSKKKSQKKNLEDEKEVC) are compositionally biased toward basic and acidic residues. Positions 322–325 (EHSY) match the HCFC1-binding motif (HBM) motif. A coiled-coil region spans residues 349-382 (LELKEQQTLGRLKSLEALVRQLKQENWLSEENVK).

As to quaternary structure, interacts with HTRA2; under apoptotic conditions. Interacts with ABRAXAS2. Cleaved by HTRA2 during apoptosis.

The protein resides in the nucleus. Its function is as follows. Has sequence-specific DNA-binding activity and can function as transcriptional repressor (in vitro). May be a regulator of cell cycle: THAP5 overexpression in human cell lines causes cell cycle arrest at G2/M phase. The protein is THAP domain-containing protein 5 (THAP5) of Macaca fascicularis (Crab-eating macaque).